Here is a 150-residue protein sequence, read N- to C-terminus: Catabolic 3-dehydroquinase 2 (150 aa).

Catalysis depends on Y23, which acts as the Proton acceptor. Residues N74, H80, and D87 each coordinate substrate. H100 (proton donor) is an active-site residue. Substrate-binding positions include 101–102 (IT) and R111.

The protein belongs to the type-II 3-dehydroquinase family. As to quaternary structure, homododecamer. Adopts a ring-like structure, composed of an arrangement of two hexameric rings stacked on top of one another.

It carries out the reaction 3-dehydroquinate = 3-dehydroshikimate + H2O. It participates in aromatic compound metabolism; 3,4-dihydroxybenzoate biosynthesis; 3,4-dihydroxybenzoate from 3-dehydroquinate: step 1/2. Functionally, is involved in the catabolism of quinate. Allows the utilization of quinate as carbon source via the beta-ketoadipate pathway. This Aspergillus flavus (strain ATCC 200026 / FGSC A1120 / IAM 13836 / NRRL 3357 / JCM 12722 / SRRC 167) protein is Catabolic 3-dehydroquinase 2.